The chain runs to 513 residues: Bifunctional purine biosynthesis protein PurH (513 aa).

In terms of domain architecture, MGS-like spans 1–145 (MTKRALISVS…KNYQDVTAVV (145 aa)).

This sequence belongs to the PurH family.

The catalysed reaction is (6R)-10-formyltetrahydrofolate + 5-amino-1-(5-phospho-beta-D-ribosyl)imidazole-4-carboxamide = 5-formamido-1-(5-phospho-D-ribosyl)imidazole-4-carboxamide + (6S)-5,6,7,8-tetrahydrofolate. The enzyme catalyses IMP + H2O = 5-formamido-1-(5-phospho-D-ribosyl)imidazole-4-carboxamide. Its pathway is purine metabolism; IMP biosynthesis via de novo pathway; 5-formamido-1-(5-phospho-D-ribosyl)imidazole-4-carboxamide from 5-amino-1-(5-phospho-D-ribosyl)imidazole-4-carboxamide (10-formyl THF route): step 1/1. It participates in purine metabolism; IMP biosynthesis via de novo pathway; IMP from 5-formamido-1-(5-phospho-D-ribosyl)imidazole-4-carboxamide: step 1/1. In Enterococcus faecalis (strain ATCC 700802 / V583), this protein is Bifunctional purine biosynthesis protein PurH.